The sequence spans 310 residues: Bifunctional phosphoglucose/phosphomannose isomerase (310 aa).

Residues 22–152 (FDGSFRTGTF…IRPKHEDIEE (131 aa)) form the SIS domain. D-fructose 6-phosphate-binding residues include Gly-41, Ser-42, Ser-80, Ser-82, Thr-85, and Arg-128. Glu-202 (proton acceptor) is an active-site residue. The D-fructose 6-phosphate site is built by His-218 and Lys-306. His-218 acts as the Proton donor in catalysis. The active-site Proton acceptor is the Lys-306.

The protein belongs to the PGI/PMI family. In terms of assembly, homodimer.

It carries out the reaction alpha-D-glucose 6-phosphate = beta-D-fructose 6-phosphate. The catalysed reaction is D-mannose 6-phosphate = D-fructose 6-phosphate. With respect to regulation, inhibited by low concentrations of erythrose 4-phosphate and 6-phosphogluconate. In terms of biological role, dual specificity isomerase that catalyzes the isomerization of both glucose-6-phosphate and mannose-6-phosphate to fructose-6-phosphate with similar catalytic efficiency. The polypeptide is Bifunctional phosphoglucose/phosphomannose isomerase (Thermoplasma acidophilum (strain ATCC 25905 / DSM 1728 / JCM 9062 / NBRC 15155 / AMRC-C165)).